The sequence spans 1258 residues: Phospholipid-transporting ATPase C887.12 (1258 aa).

Disordered regions lie at residues 1-41 (MARD…LGED) and 53-83 (YISSSGQNSTNPFLADTRIENSPLGSESKAN). Residues 1–183 (MARDVDNKQN…PKFLKEQFSK (183 aa)) lie on the Cytoplasmic side of the membrane. A compositionally biased stretch (polar residues) spans 53 to 64 (YISSSGQNSTNP). The helical transmembrane segment at 184-204 (YANLFFLFTAVVQQIPGITPV) threads the bilayer. Residues 205–208 (NRYT) lie on the Lumenal side of the membrane. Residues 209–229 (TIGPMLIVLSVSGIKEIMEDI) form a helical membrane-spanning segment. At 230-406 (KRKKQDQELN…TSVEKQVNSQ (177 aa)) the chain is on the cytoplasmic side. A helical transmembrane segment spans residues 407–427 (ILFLLCIFVFLCFASSLGALI). Over 428 to 451 (HRSVYGSALSYVKYTSNRAGMFFK) the chain is Lumenal. Residues 452–472 (GLLTFWILYSNLVPISLFVTF) traverse the membrane as a helical segment. The Cytoplasmic portion of the chain corresponds to 473 to 974 (ELVRYIQAQL…KLILYSFYKN (502 aa)). Residue aspartate 518 is the 4-aspartylphosphate intermediate of the active site. ATP-binding residues include aspartate 518, lysine 519, threonine 520, glutamate 613, phenylalanine 654, serine 656, lysine 659, lysine 677, arginine 710, threonine 711, threonine 790, glycine 791, aspartate 792, arginine 883, and lysine 889. Aspartate 518 lines the Mg(2+) pocket. Threonine 520 is a Mg(2+) binding site. Aspartate 909 contacts Mg(2+). Positions 912 and 913 each coordinate ATP. Aspartate 913 is a Mg(2+) binding site. Residues 975-995 (IALYMTQFWYAFCNAFSGQVI) traverse the membrane as a helical segment. Residues 996-998 (FES) are Lumenal-facing. Residues 999–1019 (WSISLYNVLFTVLPPVVIGIF) form a helical membrane-spanning segment. Residues 1020–1051 (DQFVSAGQLFQYPQLYQLGQRSEFFNLKRFWS) are Cytoplasmic-facing. A helical membrane pass occupies residues 1052–1072 (WITNGFYHSLLLFLCSIAVFY). The Lumenal segment spans residues 1073 to 1086 (YDGPNKDGLASGHW). Residues 1087-1107 (VWGTTLYAAILATVLGKAALI) traverse the membrane as a helical segment. Residue lysine 1103 participates in a 1,2-diacyl-sn-glycero-3-phospho-(1D-myo-inositol 4-phosphate) binding. Topologically, residues 1108 to 1115 (SNHWTQYT) are cytoplasmic. A helical membrane pass occupies residues 1116–1136 (VIATLGSFLLWIVFMPIYAVA). The Lumenal segment spans residues 1137-1148 (APAIGFSKEYYG). The helical transmembrane segment at 1149-1169 (IIPHLYGNLKFWASLLVLPTI) threads the bilayer. The Cytoplasmic segment spans residues 1170 to 1258 (ALMRDFVWKY…HTRGAYGEMR (89 aa)). The a 1,2-diacyl-sn-glycero-3-phospho-(1D-myo-inositol 4-phosphate) site is built by arginine 1173, tryptophan 1177, lysine 1178, tyrosine 1189, and histidine 1190.

It belongs to the cation transport ATPase (P-type) (TC 3.A.3) family. Type IV subfamily. Mg(2+) serves as cofactor.

It is found in the endoplasmic reticulum membrane. The protein resides in the golgi apparatus. Its subcellular location is the trans-Golgi network membrane. The enzyme catalyses ATP + H2O + phospholipidSide 1 = ADP + phosphate + phospholipidSide 2.. The catalysed reaction is a 1,2-diacyl-sn-glycero-3-phospho-L-serine(out) + ATP + H2O = a 1,2-diacyl-sn-glycero-3-phospho-L-serine(in) + ADP + phosphate + H(+). It carries out the reaction a 1,2-diacyl-sn-glycero-3-phosphoethanolamine(out) + ATP + H2O = a 1,2-diacyl-sn-glycero-3-phosphoethanolamine(in) + ADP + phosphate + H(+). Its function is as follows. Catalytic component of a P4-ATPase flippase complex which catalyzes the hydrolysis of ATP coupled to the transport of phosphatidylserine and small amounts of ethanolamine from the lumen to the cytosolic leaflet of the trans-Golgi network and ensures the maintenance of asymmetric distribution of phospholipids. The polypeptide is Phospholipid-transporting ATPase C887.12 (Schizosaccharomyces pombe (strain 972 / ATCC 24843) (Fission yeast)).